A 540-amino-acid polypeptide reads, in one-letter code: Probable LRR receptor-like serine/threonine-protein kinase RPK1 (540 aa).

The N-terminal stretch at 1 to 19 is a signal peptide; sequence MKLLGLVFLLFNLFMFSFS. Residues 20–198 are Extracellular-facing; sequence RKLLTESGGG…PGKSGLYPIE (179 aa). LRR repeat units follow at residues 118 to 142 and 144 to 169; these read LSEIRVLSLSFNDLRGEIPKEIWGL and KLEILDLKGNNFIGGIRVVDNVVLRK. Residues 199–219 form a helical membrane-spanning segment; it reads IASIVSASVIVFVLLVLVILF. The Cytoplasmic segment spans residues 220–540; sequence IYTRKWKRNS…LLKRIQPSRL (321 aa). Threonine 250 and threonine 258 each carry phosphothreonine. One can recognise a Protein kinase domain in the interval 261-535; it reads FSNSNCIGHG…KQAVRLLKRI (275 aa). ATP is bound by residues 267 to 275 and lysine 289; that span reads IGHGGFGST. Phosphotyrosine is present on residues tyrosine 334 and tyrosine 372. Residue aspartate 385 is the Proton acceptor of the active site. Tyrosine 427 carries the phosphotyrosine modification. Threonine 435 is subject to Phosphothreonine.

This sequence belongs to the protein kinase superfamily. Ser/Thr protein kinase family. As to expression, expressed in roots, stems, leaves, and flowers.

The protein localises to the cell membrane. The enzyme catalyses L-seryl-[protein] + ATP = O-phospho-L-seryl-[protein] + ADP + H(+). It carries out the reaction L-threonyl-[protein] + ATP = O-phospho-L-threonyl-[protein] + ADP + H(+). In terms of biological role, involved in the main abscisic acid-mediated (ABA) signaling pathway and in early ABA perception. Together with RPK2, required for pattern formation along the radial axis (e.g. the apical embryonic domain cell types that generate cotyledon primordia), and the apical-basal axis (e.g. differentiation of the basal pole during early embryogenesis). The chain is Probable LRR receptor-like serine/threonine-protein kinase RPK1 (RPK1) from Arabidopsis thaliana (Mouse-ear cress).